The sequence spans 192 residues: UPF0312 protein PSPTO_5071 (192 aa).

Positions 1-23 (MLKKSLAALALGTALLSAGQAMA) are cleaved as a signal peptide.

The protein belongs to the UPF0312 family. Type 1 subfamily.

The protein resides in the periplasm. In Pseudomonas syringae pv. tomato (strain ATCC BAA-871 / DC3000), this protein is UPF0312 protein PSPTO_5071.